A 376-amino-acid polypeptide reads, in one-letter code: Protein STRICTOSIDINE SYNTHASE-LIKE 2 (376 aa).

Positions 1–23 are cleaved as a signal peptide; sequence MMKLLLVVATSVALIFSVTDLSG. N-linked (GlcNAc...) asparagine glycans are attached at residues N79 and N244.

The protein belongs to the strictosidine synthase family.

The protein resides in the vacuole. This is Protein STRICTOSIDINE SYNTHASE-LIKE 2 from Arabidopsis thaliana (Mouse-ear cress).